The chain runs to 351 residues: Ion-translocating oxidoreductase complex subunit D (351 aa).

4 consecutive transmembrane segments (helical) span residues 18–38, 40–60, 87–107, and 121–141; these read IMLL…YFFG, GSLI…GAVL, LPPL…IVIA, and PAMV…TSWL. Threonine 185 is modified (FMN phosphoryl threonine). Helical transmembrane passes span 211–231, 241–261, 264–284, 298–318, and 321–341; these read VLAG…GLLL, IPVS…MIAP, FASP…FFIA, LIFG…GGYP, and VAFA…YTQP.

This sequence belongs to the NqrB/RnfD family. In terms of assembly, the complex is composed of six subunits: RnfA, RnfB, RnfC, RnfD, RnfE and RnfG. FMN is required as a cofactor.

Its subcellular location is the cell inner membrane. Part of a membrane-bound complex that couples electron transfer with translocation of ions across the membrane. This Yersinia pestis protein is Ion-translocating oxidoreductase complex subunit D.